The primary structure comprises 464 residues: MTSSLSLHSSFVPSFADLSDRGLISKNSPTSVSISKVPTWEKKQISNRNSFKLNCVMEKSVDGQTHSTVNNTTDSLNTMNIKEEASVSTLLVNLDNKFDPFDAMSTPLYQTATFKQPSAIENGPYDYTRSGNPTRDALESLLAKLDKADRAFCFTSGMAALSAVTHLIKNGEEIVAGDDVYGGSDRLLSQVVPRSGVVVKRVNTTKLDEVAAAIGPQTKLVWLESPTNPRQQISDIRKISEMAHAQGALVLVDNSIMSPVLSRPLELGADIVMHSATKFIAGHSDVMAGVLAVKGEKLAKEVYFLQNSEGSGLAPFDCWLCLRGIKTMALRIEKQQENARKIAMYLSSHPRVKKVYYAGLPDHPGHHLHFSQAKGAGSVFSFITGSVALSKHLVETTKYFSIAVSFGSVKSLISMPCFMSHASIPAEVREARGLTEDLVRISAGIEDVDDLISDLDIAFKTFPL.

A chloroplast-targeting transit peptide spans 1–55; the sequence is MTSSLSLHSSFVPSFADLSDRGLISKNSPTSVSISKVPTWEKKQISNRNSFKLNC. The pyridoxal 5'-phosphate site is built by tyrosine 127, arginine 129, glycine 157, methionine 158, serine 275, and threonine 277. At lysine 278 the chain carries N6-(pyridoxal phosphate)lysine.

The protein belongs to the trans-sulfuration enzymes family. Forms homodimers. May form homotetramers from two homodimers. The cofactor is pyridoxal 5'-phosphate.

It is found in the plastid. Its subcellular location is the chloroplast. It carries out the reaction L,L-cystathionine + H2O = L-homocysteine + pyruvate + NH4(+). The catalysed reaction is an S-substituted L-cysteine + H2O = a thiol + pyruvate + NH4(+). It participates in amino-acid biosynthesis; L-methionine biosynthesis via de novo pathway; L-homocysteine from L-cystathionine: step 1/1. Its function is as follows. Catalyzes the penultimate step in the de novo biosynthesis of methionine. Its role in methionine metabolism may affect plant development in different organs, probably by modifying plant auxin transport. Its cysteine desulfhydrase activity may be involved in hydrogen sulfur production using L-cysteine as a substrate. The sequence is that of Cystathionine beta-lyase, chloroplastic from Arabidopsis thaliana (Mouse-ear cress).